The chain runs to 75 residues: SPbeta prophage-derived uncharacterized protein YomT (75 aa).

The protein is SPbeta prophage-derived uncharacterized protein YomT (yomT) of Bacillus subtilis (strain 168).